Reading from the N-terminus, the 779-residue chain is uncharacterized protein (779 aa).

Serine 97 and serine 120 each carry phosphoserine. Positions 125 to 135 (EIDGEDEKKSV) are enriched in basic and acidic residues. Residues 125 to 174 (EIDGEDEKKSVGQESITGSAKRKDRRSKTNGSKRQKAEANREPPSDISLS) form a disordered region. Positions 144 to 158 (AKRKDRRSKTNGSKR) are enriched in basic residues. The span at 159–168 (QKAEANREPP) shows a compositional bias: basic and acidic residues. ATP-binding positions include 215 to 222 (GPPGCGKT) and 533 to 540 (GPPGCGKT). The segment at 759 to 779 (DRQKYQRLAKRWSSASTNDAD) is disordered.

This sequence belongs to the AAA ATPase family.

It is found in the nucleus. This is an uncharacterized protein from Schizosaccharomyces pombe (strain 972 / ATCC 24843) (Fission yeast).